The chain runs to 213 residues: Outer-membrane lipoprotein carrier protein (213 aa).

An N-terminal signal peptide occupies residues 1–23; sequence MKKLLKQSLLGFALVSMTGAAFA.

Belongs to the LolA family. As to quaternary structure, monomer.

The protein localises to the periplasm. Participates in the translocation of lipoproteins from the inner membrane to the outer membrane. Only forms a complex with a lipoprotein if the residue after the N-terminal Cys is not an aspartate (The Asp acts as a targeting signal to indicate that the lipoprotein should stay in the inner membrane). The protein is Outer-membrane lipoprotein carrier protein of Actinobacillus pleuropneumoniae serotype 7 (strain AP76).